The sequence spans 364 residues: Inner membrane ABC transporter permease protein YejB (364 aa).

Topologically, residues 1–8 (MGAYLIRR) are periplasmic. A helical membrane pass occupies residues 9–29 (LLLVIPTLWAIITINFFIVQI). Topologically, residues 30–37 (APGGPVDQ) are cytoplasmic. Residues 38–58 (AIAAIEFGNAGVLPGAGGEGV) traverse the membrane as a helical segment. Residues 59 to 135 (RASHAQTGVG…LTLIKDSLPV (77 aa)) lie on the Periplasmic side of the membrane. In terms of domain architecture, ABC transmembrane type-1 spans 133–348 (LPVSITLGLW…LIGLLLNIVS (216 aa)). The helical transmembrane segment at 136-156 (SITLGLWSTLIIYLVSIPLGI) threads the bilayer. The Cytoplasmic portion of the chain corresponds to 157–172 (RKAVYNGSRFDVWSSA). Residues 173 to 193 (FIIIGYAIPAFLFAILLIVFF) form a helical membrane-spanning segment. Residues 194–224 (AGGSYFDLFPLRGLVSANFDSLPWYQKITDY) are Periplasmic-facing. The chain crosses the membrane as a helical span at residues 225-245 (LWHITLPVLATVIGGFAALTM). The Cytoplasmic portion of the chain corresponds to 246 to 284 (LTKNSFLDEVRKQYVVTARAKGVSEKNILWKHVFRNAML). A helical transmembrane segment spans residues 285–305 (LVIAGFPATFISMFFTGSLLI). The Periplasmic segment spans residues 306 to 326 (EVMFSLNGLGLLGYEATVSRD). Residues 327–347 (YPVMFGTLYIFTLIGLLLNIV) traverse the membrane as a helical segment. Over 348 to 364 (SDISYTLVDPRIDFEGR) the chain is Cytoplasmic.

The protein belongs to the binding-protein-dependent transport system permease family. OppBC subfamily.

The protein localises to the cell inner membrane. Its function is as follows. Probably part of a binding-protein-dependent transport system. Probably responsible for the translocation of the substrate across the membrane. The chain is Inner membrane ABC transporter permease protein YejB (yejB) from Escherichia coli O157:H7.